A 445-amino-acid polypeptide reads, in one-letter code: N-succinylarginine dihydrolase (445 aa).

Residues 19-28 (AGLSFGNVAS), N110, and 137-138 (HR) each bind substrate. E174 is an active-site residue. R214 provides a ligand contact to substrate. H250 is a catalytic residue. D252 and N363 together coordinate substrate. Residue C369 is the Nucleophile of the active site.

This sequence belongs to the succinylarginine dihydrolase family. In terms of assembly, homodimer.

The enzyme catalyses N(2)-succinyl-L-arginine + 2 H2O + 2 H(+) = N(2)-succinyl-L-ornithine + 2 NH4(+) + CO2. It functions in the pathway amino-acid degradation; L-arginine degradation via AST pathway; L-glutamate and succinate from L-arginine: step 2/5. Catalyzes the hydrolysis of N(2)-succinylarginine into N(2)-succinylornithine, ammonia and CO(2). The chain is N-succinylarginine dihydrolase from Shewanella halifaxensis (strain HAW-EB4).